Here is a 94-residue protein sequence, read N- to C-terminus: Large ribosomal subunit protein bL25 (94 aa).

Belongs to the bacterial ribosomal protein bL25 family. As to quaternary structure, part of the 50S ribosomal subunit; part of the 5S rRNA/L5/L18/L25 subcomplex. Contacts the 5S rRNA. Binds to the 5S rRNA independently of L5 and L18.

This is one of the proteins that binds to the 5S RNA in the ribosome where it forms part of the central protuberance. In Salmonella gallinarum (strain 287/91 / NCTC 13346), this protein is Large ribosomal subunit protein bL25.